Reading from the N-terminus, the 428-residue chain is Elongation factor 1-alpha (428 aa).

The tr-type G domain occupies 5–215 (KPHVNIVFIG…ALDQIPEPPK (211 aa)). A G1 region spans residues 14 to 21 (GHVDHGKS). Position 14 to 21 (14 to 21 (GHVDHGKS)) interacts with GTP. S21 serves as a coordination point for Mg(2+). Residues 68 to 72 (GITID) are G2. Positions 89–92 (DAPG) are G3. Residues 89 to 93 (DAPGH) and 144 to 147 (NKMD) contribute to the GTP site. Residues 144-147 (NKMD) form a G4 region. Positions 181-183 (SAW) are G5.

It belongs to the TRAFAC class translation factor GTPase superfamily. Classic translation factor GTPase family. EF-Tu/EF-1A subfamily.

The protein resides in the cytoplasm. It carries out the reaction GTP + H2O = GDP + phosphate + H(+). Functionally, GTP hydrolase that promotes the GTP-dependent binding of aminoacyl-tRNA to the A-site of ribosomes during protein biosynthesis. This Thermococcus onnurineus (strain NA1) protein is Elongation factor 1-alpha.